Reading from the N-terminus, the 352-residue chain is ATP synthase subunit a 2 (352 aa).

Residues methionine 1–alanine 26 form the signal peptide. The next 7 membrane-spanning stretches (helical) occupy residues valine 112–serine 132, phenylalanine 172–isoleucine 192, glycine 195–isoleucine 215, histidine 232–glycine 252, leucine 264–isoleucine 284, isoleucine 289–valine 309, and alanine 310–alanine 330.

Belongs to the ATPase A chain family. In terms of assembly, F-type ATPases have 2 components, CF(1) - the catalytic core - and CF(0) - the membrane proton channel. CF(1) has five subunits: alpha(3), beta(3), gamma(1), delta(1), epsilon(1). CF(0) has four main subunits: a, b, b' and c.

It is found in the cell inner membrane. Functionally, key component of the proton channel; it plays a direct role in the translocation of protons across the membrane. In Chlorobaculum tepidum (strain ATCC 49652 / DSM 12025 / NBRC 103806 / TLS) (Chlorobium tepidum), this protein is ATP synthase subunit a 2.